Here is a 248-residue protein sequence, read N- to C-terminus: Mannose-binding protein C (248 aa).

A signal peptide spans 1–20 (MSLFPSLTLLLLSVVATSYS). Positions 42 to 99 (GINGFPGKDGRDGTKGEKGEPGQGLRGLQGPPGKLGPPGNPGSSGSPGPKGQKGDPGE) constitute a Collagen-like domain. Residues 43-113 (INGFPGKDGR…DSSLAASERK (71 aa)) are disordered. Position 47 is a 4-hydroxyproline (P47). Basic and acidic residues predominate over residues 49 to 61 (KDGRDGTKGEKGE). P73, P79, P82, and P88 each carry 4-hydroxyproline. The span at 82–91 (PGSSGSPGPK) shows a compositional bias: low complexity. Residues 112 to 130 (RKALQTEMARIKKWLTFSL) are a coiled coil. The C-type lectin domain maps to 134–245 (VGNKFFLTNG…CSSSHLALCE (112 aa)). 2 cysteine pairs are disulfide-bonded: C155–C244 and C222–C236.

Oligomeric complex of 3 or more homotrimers. Interacts with MASP1 and MASP2. Interacts with MEP1A and MEP1B and may inhibit their catalytic activity. In terms of processing, hydroxylation on proline residues within the sequence motif, GXPG, is most likely to be 4-hydroxy as this fits the requirement for 4-hydroxylation in vertebrates.

It is found in the secreted. Functionally, calcium-dependent lectin involved in innate immune defense. Binds mannose, fucose and N-acetylglucosamine on different microorganisms and activates the lectin complement pathway. Binds to late apoptotic cells, as well as to apoptotic blebs and to necrotic cells, but not to early apoptotic cells, facilitating their uptake by macrophages. This chain is Mannose-binding protein C (MBL2), found in Chlorocebus aethiops (Green monkey).